The sequence spans 869 residues: DNA mismatch repair protein MutS (869 aa).

Position 602-609 (602-609) interacts with ATP; it reads GPNMSGKS.

Belongs to the DNA mismatch repair MutS family.

In terms of biological role, this protein is involved in the repair of mismatches in DNA. It is possible that it carries out the mismatch recognition step. This protein has a weak ATPase activity. The protein is DNA mismatch repair protein MutS of Staphylococcus carnosus (strain TM300).